A 173-amino-acid chain; its full sequence is Crossover junction endodeoxyribonuclease RuvC (173 aa).

Residues aspartate 8, glutamate 67, and aspartate 139 contribute to the active site. 3 residues coordinate Mg(2+): aspartate 8, glutamate 67, and aspartate 139.

The protein belongs to the RuvC family. Homodimer which binds Holliday junction (HJ) DNA. The HJ becomes 2-fold symmetrical on binding to RuvC with unstacked arms; it has a different conformation from HJ DNA in complex with RuvA. In the full resolvosome a probable DNA-RuvA(4)-RuvB(12)-RuvC(2) complex forms which resolves the HJ. Requires Mg(2+) as cofactor.

It is found in the cytoplasm. The enzyme catalyses Endonucleolytic cleavage at a junction such as a reciprocal single-stranded crossover between two homologous DNA duplexes (Holliday junction).. Its function is as follows. The RuvA-RuvB-RuvC complex processes Holliday junction (HJ) DNA during genetic recombination and DNA repair. Endonuclease that resolves HJ intermediates. Cleaves cruciform DNA by making single-stranded nicks across the HJ at symmetrical positions within the homologous arms, yielding a 5'-phosphate and a 3'-hydroxyl group; requires a central core of homology in the junction. The consensus cleavage sequence is 5'-(A/T)TT(C/G)-3'. Cleavage occurs on the 3'-side of the TT dinucleotide at the point of strand exchange. HJ branch migration catalyzed by RuvA-RuvB allows RuvC to scan DNA until it finds its consensus sequence, where it cleaves and resolves the cruciform DNA. In Vibrio vulnificus (strain YJ016), this protein is Crossover junction endodeoxyribonuclease RuvC.